We begin with the raw amino-acid sequence, 599 residues long: Adenine deaminase (599 aa).

It belongs to the metallo-dependent hydrolases superfamily. Adenine deaminase family. Mn(2+) is required as a cofactor.

It catalyses the reaction adenine + H2O + H(+) = hypoxanthine + NH4(+). In Clostridium botulinum (strain ATCC 19397 / Type A), this protein is Adenine deaminase.